The following is a 350-amino-acid chain: Ferredoxin--NADP reductase (350 aa).

FAD-binding residues include T25, E44, Q52, Y57, V97, F132, D298, and S339.

The protein belongs to the ferredoxin--NADP reductase type 2 family. Homodimer. It depends on FAD as a cofactor.

It carries out the reaction 2 reduced [2Fe-2S]-[ferredoxin] + NADP(+) + H(+) = 2 oxidized [2Fe-2S]-[ferredoxin] + NADPH. In Chlorobium limicola (strain DSM 245 / NBRC 103803 / 6330), this protein is Ferredoxin--NADP reductase.